The following is a 155-amino-acid chain: Small ribosomal subunit protein uS7c (155 aa).

Belongs to the universal ribosomal protein uS7 family. In terms of assembly, part of the 30S ribosomal subunit.

It is found in the plastid. It localises to the chloroplast. In terms of biological role, one of the primary rRNA binding proteins, it binds directly to 16S rRNA where it nucleates assembly of the head domain of the 30S subunit. This is Small ribosomal subunit protein uS7c (rps7) from Marchantia polymorpha (Common liverwort).